A 302-amino-acid polypeptide reads, in one-letter code: MTTSRFATFDIESETGLTPGAYPAPLPTLEQQLHDRNAILAAIPSLARAKLDAATLKRRFANFLLTLGMVGTTSKGSYEELIIPPVKGMGSSTGFRARELVQIITSSPAPPGFDGNQTLRQFARPYAPQVQNMIAQGKFKTNLYDKYGKSVGAPPHVCIDFNDAMDLQMFHSTAEFESAHKVRELAIAEASARENAPRPAANPRAAKPIIGQTAPAFHSGDAAKQSGGQPVNIKPSLAQSAGFDSHRPPPETPPRAGTPSSQKSGQSGQTTIQPPASHGILSGMLGSHKSTPHSSPQQTPKK.

A disordered region spans residues 217–302 (FHSGDAAKQS…HSSPQQTPKK (86 aa)). Positions 254–271 (PRAGTPSSQKSGQSGQTT) are enriched in low complexity. The segment covering 288 to 302 (HKSTPHSSPQQTPKK) has biased composition (polar residues).

It is found in the virion. In terms of biological role, capsid protein self-assembles to form a flexuous, filamentous capsid (Potential). The capsid encapsulates the single-stranded RNA genome. The chain is Capsid protein from Botryotinia fuckeliana (Noble rot fungus).